We begin with the raw amino-acid sequence, 250 residues long: 5'-nucleotidase SurE (250 aa).

Asp9, Asp10, Ser40, and Asn92 together coordinate a divalent metal cation.

It belongs to the SurE nucleotidase family. A divalent metal cation serves as cofactor.

It localises to the cytoplasm. The enzyme catalyses a ribonucleoside 5'-phosphate + H2O = a ribonucleoside + phosphate. Its function is as follows. Nucleotidase that shows phosphatase activity on nucleoside 5'-monophosphates. The polypeptide is 5'-nucleotidase SurE (Idiomarina loihiensis (strain ATCC BAA-735 / DSM 15497 / L2-TR)).